We begin with the raw amino-acid sequence, 433 residues long: 3-phosphoshikimate 1-carboxyvinyltransferase (433 aa).

3-phosphoshikimate contacts are provided by K22, S23, and R27. Residue K22 participates in phosphoenolpyruvate binding. Positions 96 and 129 each coordinate phosphoenolpyruvate. Residues S175, S176, Q177, S203, D318, N341, and K345 each contribute to the 3-phosphoshikimate site. Q177 is a binding site for phosphoenolpyruvate. The active-site Proton acceptor is D318. Positions 349, 393, and 418 each coordinate phosphoenolpyruvate.

This sequence belongs to the EPSP synthase family. As to quaternary structure, monomer.

Its subcellular location is the cytoplasm. The enzyme catalyses 3-phosphoshikimate + phosphoenolpyruvate = 5-O-(1-carboxyvinyl)-3-phosphoshikimate + phosphate. It participates in metabolic intermediate biosynthesis; chorismate biosynthesis; chorismate from D-erythrose 4-phosphate and phosphoenolpyruvate: step 6/7. In terms of biological role, catalyzes the transfer of the enolpyruvyl moiety of phosphoenolpyruvate (PEP) to the 5-hydroxyl of shikimate-3-phosphate (S3P) to produce enolpyruvyl shikimate-3-phosphate and inorganic phosphate. The chain is 3-phosphoshikimate 1-carboxyvinyltransferase from Mannheimia succiniciproducens (strain KCTC 0769BP / MBEL55E).